A 438-amino-acid polypeptide reads, in one-letter code: Xylose isomerase (438 aa).

Catalysis depends on residues histidine 100 and aspartate 103. The Mg(2+) site is built by glutamate 231, glutamate 267, histidine 270, aspartate 295, aspartate 306, aspartate 308, and aspartate 338.

The protein belongs to the xylose isomerase family. Homotetramer. The cofactor is Mg(2+).

The protein resides in the cytoplasm. It catalyses the reaction alpha-D-xylose = alpha-D-xylulofuranose. The sequence is that of Xylose isomerase (xylA) from Thermoanaerobacter pseudethanolicus (strain ATCC 33223 / 39E) (Clostridium thermohydrosulfuricum).